Here is a 222-residue protein sequence, read N- to C-terminus: 2-C-methyl-D-erythritol 4-phosphate cytidylyltransferase (222 aa).

It belongs to the IspD/TarI cytidylyltransferase family. IspD subfamily.

The catalysed reaction is 2-C-methyl-D-erythritol 4-phosphate + CTP + H(+) = 4-CDP-2-C-methyl-D-erythritol + diphosphate. Its pathway is isoprenoid biosynthesis; isopentenyl diphosphate biosynthesis via DXP pathway; isopentenyl diphosphate from 1-deoxy-D-xylulose 5-phosphate: step 2/6. In terms of biological role, catalyzes the formation of 4-diphosphocytidyl-2-C-methyl-D-erythritol from CTP and 2-C-methyl-D-erythritol 4-phosphate (MEP). This Thermotoga petrophila (strain ATCC BAA-488 / DSM 13995 / JCM 10881 / RKU-1) protein is 2-C-methyl-D-erythritol 4-phosphate cytidylyltransferase.